We begin with the raw amino-acid sequence, 311 residues long: MALPILLDCDPGHDDAIAIVLALASPELDVKAITSSAGNQTPEKTLRNVLRMLTLLNRTDIPVAGGAVKPLMRELIIADNVHGESGLDGPALPEPTFAPQNCTAVELMAKTLRESAEPVTIVSTGPQTNVALLLNSHPELHSKIARIVIMGGAMGLGNWTPAAEFNIYVDPEAAEIVFQSGIPVVMAGLDVTHKAQIHVEDTERFRAIGNPVSTIVAELLDFFLEYHKDEKWGFVGAPLHDPCTIAWLLKPELFTTVERWVGVETQGKYTQGMTVVDYYYLTGNKPNASVMVDVDRQGFVDLLADRLKFYA.

Residue His-240 is part of the active site.

Belongs to the IUNH family. RihA subfamily.

Functionally, hydrolyzes with equal efficiency cytidine or uridine to ribose and cytosine or uracil, respectively. The polypeptide is Pyrimidine-specific ribonucleoside hydrolase RihA (Escherichia coli O17:K52:H18 (strain UMN026 / ExPEC)).